Reading from the N-terminus, the 1176-residue chain is Myosin light chain kinase, smooth muscle (1176 aa).

Residues 1–41 (MDFRANLQRQVKPKTLSEEERKVHGPQQVDFRSVLAKKGTP) form an actin-binding (calcium/calmodulin-sensitive) region. The disordered stretch occupies residues 1-354 (MDFRANLQRQ…SEKRPESRGT (354 aa)). A calmodulin-binding region spans residues 26–41 (PQQVDFRSVLAKKGTP). The segment covering 43–55 (TPVPEKVPPPKPA) has biased composition (pro residues). 16 repeat units span residues 100–111 (FLKPVGNAKLAD), 112–123 (TPKPLSSTKPAE), 124–135 (TPKPLGNVKPAE), 136–147 (TPKPLGSTKPAE), 148–159 (TPKPLGSTKPAE), 160–171 (TPKPLGNVKPAE), 172–183 (TPKPLGNIKPTE), 184–195 (TPKPLGSTKPAE), 196–207 (TPKPLGSTKPAE), 208–219 (TPKPLGNVKPAE), 220–231 (TPKPLGNVKPAE), 232–243 (TPKPLGNVKPAE), 244–255 (TPKPVSNAKPAE), 256–267 (TLKPVGNAKPAE), 268–279 (TPKPLSNVKPAE), and 280–291 (TPKLVGNAKPAE). Residues 100–291 (FLKPVGNAKL…KLVGNAKPAE (192 aa)) are 16 X 12 AA tandem repeats. The residue at position 202 (serine 202) is a Phosphoserine. The segment at 319–721 (PTGKEELKKE…TVTVNTEQKV (403 aa)) is actin-binding (calcium/calmodulin-insensitive). Over residues 320–335 (TGKEELKKEIKNDVNC) the composition is skewed to basic and acidic residues. The region spanning 356–444 (PTFEEKLQDL…GQAESSCQVT (89 aa)) is the Ig-like C2-type 1 domain. Cysteine 377 and cysteine 428 are disulfide-bonded. A disordered region spans residues 448–497 (PDAPTSENAKAPEMKARRPKSSLPPVLGTESDATVKKKPAPKTPPKAAMP). An Ig-like C2-type 2 domain is found at 498–586 (PQIIQFPEDQ…GSRQAQVNLT (89 aa)). One can recognise a Fibronectin type-III domain in the interval 594 to 686 (PAGTPCASDI…QESELTALGE (93 aa)). The disordered stretch occupies residues 673-707 (SEPSQESELTALGEKPEEEPKDEVEVSDDDEKEPE). The span at 688–706 (PEEEPKDEVEVSDDDEKEP) shows a compositional bias: acidic residues. Serine 699 carries the post-translational modification Phosphoserine. Position 710 is a phosphotyrosine; by ABL1 (tyrosine 710). A Protein kinase domain is found at 725-980 (YDIEERLGSG…CTQCLQHPWL (256 aa)). ATP contacts are provided by residues 731 to 739 (LGSGKFGQV) and lysine 754. A Phosphotyrosine; by ABL1 modification is found at tyrosine 836. The active-site Proton acceptor is the aspartate 846. At tyrosine 896 the chain carries Phosphotyrosine; by ABL1. Residues 972-1035 (TQCLQHPWLM…SGLSGRKSST (64 aa)) form a calmodulin-binding region. Phosphoserine is present on residues serine 1020, serine 1021, serine 1033, serine 1034, and serine 1037. Phosphothreonine is present on threonine 1039. Serine 1040 carries the phosphoserine modification. One can recognise an Ig-like C2-type 3 domain in the interval 1069-1158 (PYFSKTIRDL…GEATCTAELI (90 aa)). Cysteine 1090 and cysteine 1142 form a disulfide bridge.

This sequence belongs to the protein kinase superfamily. CAMK Ser/Thr protein kinase family. As to quaternary structure, all isoforms including Telokin bind calmodulin. Interacts with SVIL. Interacts with CTTN; this interaction is reduced during thrombin-induced endothelial cell (EC) contraction but is promoted by the barrier-protective agonist sphingosine 1-phosphate (S1P) within lamellipodia. A complex made of ABL1, CTTN and MYLK regulates cortical actin-based cytoskeletal rearrangement critical to sphingosine 1-phosphate (S1P)-mediated endothelial cell (EC) barrier enhancement. Binds to NAA10/ARD1 and PTK2B/PYK2. Requires Mg(2+) as cofactor. It depends on Ca(2+) as a cofactor. Post-translationally, the C-terminus is deglutamylated by AGTPBP1/CCP1, AGBL1/CCP4 and AGBL4/CCP6, leading to the formation of Myosin light chain kinase, smooth muscle, deglutamylated form. The consequences of C-terminal deglutamylation are unknown. In terms of processing, can probably be down-regulated by phosphorylation. Tyrosine phosphorylation by ABL1 increases kinase activity, reverses MLCK-mediated inhibition of Arp2/3-mediated actin polymerization, and enhances CTTN-binding. Phosphorylation by SRC promotes CTTN binding.

It is found in the cytoplasm. The protein localises to the cell projection. The protein resides in the lamellipodium. Its subcellular location is the cleavage furrow. It localises to the cytoskeleton. It is found in the stress fiber. The enzyme catalyses L-seryl-[myosin light chain] + ATP = O-phospho-L-seryl-[myosin light chain] + ADP + H(+). It catalyses the reaction L-threonyl-[myosin light chain] + ATP = O-phospho-L-threonyl-[myosin light chain] + ADP + H(+). Functionally, calcium/calmodulin-dependent myosin light chain kinase implicated in smooth muscle contraction via phosphorylation of myosin light chains (MLC). Also regulates actin-myosin interaction through a non-kinase activity. Phosphorylates PTK2B/PYK2 and myosin light-chains. Involved in the inflammatory response (e.g. apoptosis, vascular permeability, leukocyte diapedesis), cell motility and morphology, airway hyperreactivity and other activities relevant to asthma. Required for tonic airway smooth muscle contraction that is necessary for physiological and asthmatic airway resistance. Necessary for gastrointestinal motility. Implicated in the regulation of endothelial as well as vascular permeability, probably via the regulation of cytoskeletal rearrangements. In the nervous system it has been shown to control the growth initiation of astrocytic processes in culture and to participate in transmitter release at synapses formed between cultured sympathetic ganglion cells. Critical participant in signaling sequences that result in fibroblast apoptosis. Plays a role in the regulation of epithelial cell survival. Required for epithelial wound healing, especially during actomyosin ring contraction during purse-string wound closure. Mediates RhoA-dependent membrane blebbing. Triggers TRPC5 channel activity in a calcium-dependent signaling, by inducing its subcellular localization at the plasma membrane. Promotes cell migration (including tumor cells) and tumor metastasis. PTK2B/PYK2 activation by phosphorylation mediates ITGB2 activation and is thus essential to trigger neutrophil transmigration during acute lung injury (ALI). May regulate optic nerve head astrocyte migration. Probably involved in mitotic cytoskeletal regulation. Regulates tight junction probably by modulating ZO-1 exchange in the perijunctional actomyosin ring. Mediates burn-induced microvascular barrier injury; triggers endothelial contraction in the development of microvascular hyperpermeability by phosphorylating MLC. Essential for intestinal barrier dysfunction. Mediates Giardia spp.-mediated reduced epithelial barrier function during giardiasis intestinal infection via reorganization of cytoskeletal F-actin and tight junctional ZO-1. Necessary for hypotonicity-induced Ca(2+) entry and subsequent activation of volume-sensitive organic osmolyte/anion channels (VSOAC) in cervical cancer cells. This chain is Myosin light chain kinase, smooth muscle (MYLK), found in Bos taurus (Bovine).